The sequence spans 266 residues: Pyrrolizixenacetamide deacetylase (266 aa).

Thr-28 is an acetate binding site. Ser-94 acts as the Nucleophile in catalysis. Leu-95 contributes to the acetate binding site. Residues Asp-215 and His-242 each act as charge relay system in the active site. His-242 contacts acetate.

It belongs to the AB hydrolase superfamily. In terms of assembly, homodimer.

The catalysed reaction is pyrrolizixenacetamide + H2O = 3-amino-5,6,7,7a-tetrahydro-1H-pyrrolizin-1-one + acetate + H(+). In terms of biological role, involved in the biosynthetic pathway of pyrrolizwilline, a pyrrolizidine alkaloid. Catalyzes the N-deacetylation of pyrrolizixenacetamide. The chain is Pyrrolizixenacetamide deacetylase from Xenorhabdus hominickii.